The chain runs to 121 residues: Basic phospholipase A2 (121 aa).

Cystine bridges form between Cys-26–Cys-114, Cys-28–Cys-44, Cys-43–Cys-94, Cys-49–Cys-121, Cys-50–Cys-87, Cys-57–Cys-80, and Cys-74–Cys-85. The Ca(2+) site is built by Tyr-27, Gly-29, and Gly-31. His-47 is an active-site residue. Asp-48 provides a ligand contact to Ca(2+). Asp-88 is a catalytic residue.

As to quaternary structure, homopentamer. The cofactor is Ca(2+). In terms of tissue distribution, expressed by the venom gland.

The protein resides in the secreted. The catalysed reaction is a 1,2-diacyl-sn-glycero-3-phosphocholine + H2O = a 1-acyl-sn-glycero-3-phosphocholine + a fatty acid + H(+). Its function is as follows. Snake venom phospholipase A2 (PLA2) that displays moderate myotoxic activity in vivo, and cytotoxic activity in vitro. In vitro, shows anticoagulant activity on human plasma and in mice causes inflammatory cell infiltration and myonecrosis in the gastrocnemius muscles of CD-1 mice 3 hours after injection (100 ug). PLA2 catalyzes the calcium-dependent hydrolysis of the 2-acyl groups in 3-sn-phosphoglycerides. This chain is Basic phospholipase A2, found in Porthidium ophryomegas (Slender hognose viper).